Here is an 806-residue protein sequence, read N- to C-terminus: MSSSTLQASLFLRPPLHTSSFKLYPCLFSSSSLSFCPQSLSSFYRLSSVLHNSRFRPLPCSLRQDNVASDSDFIPKDSAFEVTDSAESNRLVSDTEVSELETNDRFVGGEETKSGGEEAEVSNGVTEGKEEDQKKSKFRIVVLMMALWAAIKRAIEKVMEWEWLSWWPFSRQEKRLEKLIAEADANPKDAALQGALLAELNKHIPEAVVQRFEQREHTVDSRGVAEYIRALVITNAISEYLPDEQTGKPSSLPALLQELKHRASGNMDESFVNPGISEKQPLHVTMVNPKVSNKSRFAQELVSTILFTVAVGLVWIMGAAALQKYIGSLGGIGTSGVGSSSSYSPKELNKEITPEKNVKTFKDVKGCDDAKQELEEVVEYLKNPSKFTRLGGKLPKGILLTGAPGTGKTLLAKAIAGEAGVPFFYRAGSEFEEMFVGVGARRVRSLFQAAKKKAPCIIFIDEIDAVGSTRKQWEGHTKKTLHQLLVEMDGFEQNEGIIVMAATNLPDILDPALTRPGRFDRHIVVPSPDVRGREEILELYLQGKPMSEDVDVKAIARGTPGFNGADLANLVNIAAIKAAVEGAEKLSSEQLEFAKDRIVMGTERKTMFVSEDSKKLTAYHESGHAIVALNTKGAHPIHKATIMPRGSALGMVTQLPSNDETSVSKRQLLARLDVCMGGRVAEELIFGLDHITTGASSDLSQATELAQYMVSSCGMSEAIGPVHIKERPSSDMQSRIDAEVVKLLREAYERVKSLLKRHEKQLHTLANALLEYETLTAEDIKRILLPKQEGEKFEEQQQEEGDLVLA.

A chloroplast and mitochondrion-targeting transit peptide spans 1–63 (MSSSTLQASL…RFRPLPCSLR (63 aa)). Basic and acidic residues predominate over residues 106-116 (FVGGEETKSGG). The disordered stretch occupies residues 106 to 130 (FVGGEETKSGGEEAEVSNGVTEGKE). The helical transmembrane segment at 301 to 321 (LVSTILFTVAVGLVWIMGAAA) threads the bilayer. Residue 402–409 (GAPGTGKT) participates in ATP binding. H620 contacts Zn(2+). The active site involves E621. Residues H624 and D698 each contribute to the Zn(2+) site.

In the N-terminal section; belongs to the AAA ATPase family. This sequence in the C-terminal section; belongs to the peptidase M41 family. Homooligomer. Requires Zn(2+) as cofactor.

The protein localises to the mitochondrion inner membrane. It localises to the plastid. Its subcellular location is the chloroplast thylakoid membrane. Its function is as follows. Probable ATP-dependent zinc metallopeptidase. Involved in the assembly and/or stability of the complexes I and V. Involved in thermotolerance but not in high light stress resistance or in the assembly/stability of the complexes I and V of the mitochondrial oxidative phosphorylation system. The polypeptide is ATP-dependent zinc metalloprotease FTSH 11, chloroplastic/mitochondrial (FTSH11) (Arabidopsis thaliana (Mouse-ear cress)).